The sequence spans 506 residues: Ribose import ATP-binding protein RbsA 2 (506 aa).

ABC transporter domains are found at residues 5–241 (LRLS…VGRR) and 251–498 (VRAA…TAGT). 37 to 44 (GENGAGKS) contacts ATP.

The protein belongs to the ABC transporter superfamily. Ribose importer (TC 3.A.1.2.1) family. In terms of assembly, the complex is composed of an ATP-binding protein (RbsA), two transmembrane proteins (RbsC) and a solute-binding protein (RbsB).

Its subcellular location is the cell inner membrane. It carries out the reaction D-ribose(out) + ATP + H2O = D-ribose(in) + ADP + phosphate + H(+). Its function is as follows. Part of the ABC transporter complex RbsABC involved in ribose import. Responsible for energy coupling to the transport system. The chain is Ribose import ATP-binding protein RbsA 2 from Burkholderia ambifaria (strain ATCC BAA-244 / DSM 16087 / CCUG 44356 / LMG 19182 / AMMD) (Burkholderia cepacia (strain AMMD)).